A 502-amino-acid chain; its full sequence is Betaine aldehyde dehydrogenase, chloroplastic (502 aa).

The transit peptide at 1–7 directs the protein to the chloroplast; the sequence is MAFPIPA. Position 240–245 (240–245) interacts with NAD(+); it reads GSSATG. E262 (proton acceptor) is an active-site residue. The Nucleophile role is filled by C296.

Belongs to the aldehyde dehydrogenase family. Homodimer.

It localises to the plastid. The protein localises to the chloroplast. It carries out the reaction betaine aldehyde + NAD(+) + H2O = glycine betaine + NADH + 2 H(+). It functions in the pathway amine and polyamine biosynthesis; betaine biosynthesis via choline pathway; betaine from betaine aldehyde: step 1/1. This chain is Betaine aldehyde dehydrogenase, chloroplastic, found in Atriplex hortensis (Mountain spinach).